Reading from the N-terminus, the 754-residue chain is Cytosolic neutral trehalase (754 aa).

Polar residues predominate over residues 1–10 (MDGKVNNNPP). Disordered stretches follow at residues 1–47 (MDGK…LSKN) and 54–73 (TFSVAEPGGGKGHSSSYTSP). Residues aspartate 117, aspartate 119, asparagine 121, glutamine 123, and aspartate 128 each contribute to the Ca(2+) site. Substrate is bound by residues arginine 305, 312-313 (WD), asparagine 349, 358-360 (RSQ), glutamate 427, arginine 476, and glycine 479. Active-site proton donor/acceptor residues include aspartate 481 and glutamate 676.

It belongs to the glycosyl hydrolase 37 family. The cofactor is Ca(2+).

It localises to the cytoplasm. It catalyses the reaction alpha,alpha-trehalose + H2O = alpha-D-glucose + beta-D-glucose. It participates in carbohydrate degradation. In terms of biological role, hydrolyzes intracellular trehalose to glucose. The disaccharide trehalose serves as a storage molecule for energy and carbohydrates that is mobilized during nutrient stress. The sequence is that of Cytosolic neutral trehalase from Kluyveromyces lactis (strain ATCC 8585 / CBS 2359 / DSM 70799 / NBRC 1267 / NRRL Y-1140 / WM37) (Yeast).